The chain runs to 233 residues: uncharacterized protein (233 aa).

Residues Asn-58, Asn-77, Asn-93, Asn-102, Asn-110, Asn-120, and Asn-155 are each glycosylated (N-linked (GlcNAc...) asparagine; by host). Residues 102-124 (NSSTTTTTNASSSDSSMYNTTRS) show a composition bias toward low complexity. The tract at residues 102–132 (NSSTTTTTNASSSDSSMYNTTRSTQRRVTYD) is disordered. The helical transmembrane segment at 168–188 (FSLLQWVLVAALAFFMYYFLW) threads the bilayer.

It belongs to the ascovirus HvAv ORF58 family.

It is found in the membrane. This is an uncharacterized protein from Trichoplusia ni ascovirus 2c (TnAV-2c).